We begin with the raw amino-acid sequence, 371 residues long: tRNA-specific 2-thiouridylase MnmA (371 aa).

ATP-binding positions include 13–20 (GMSGGVDS) and M39. The interval 99 to 101 (NPD) is interaction with target base in tRNA. C104 (nucleophile) is an active-site residue. The cysteines at positions 104 and 200 are disulfide-linked. G128 contacts ATP. Residues 150-152 (KDQ) form an interaction with tRNA region. C200 functions as the Cysteine persulfide intermediate in the catalytic mechanism. The interaction with tRNA stretch occupies residues 308–309 (RY).

Belongs to the MnmA/TRMU family.

Its subcellular location is the cytoplasm. The catalysed reaction is S-sulfanyl-L-cysteinyl-[protein] + uridine(34) in tRNA + AH2 + ATP = 2-thiouridine(34) in tRNA + L-cysteinyl-[protein] + A + AMP + diphosphate + H(+). Its function is as follows. Catalyzes the 2-thiolation of uridine at the wobble position (U34) of tRNA, leading to the formation of s(2)U34. The sequence is that of tRNA-specific 2-thiouridylase MnmA from Listeria monocytogenes serotype 4a (strain HCC23).